We begin with the raw amino-acid sequence, 88 residues long: Large ribosomal subunit protein bL31 (88 aa).

The tract at residues 67–88 is disordered; it reads MGSVDNATSEKKSATDETSKES. Positions 74 to 88 are enriched in basic and acidic residues; sequence TSEKKSATDETSKES.

This sequence belongs to the bacterial ribosomal protein bL31 family. Type A subfamily. As to quaternary structure, part of the 50S ribosomal subunit.

Binds the 23S rRNA. This Synechococcus sp. (strain CC9311) protein is Large ribosomal subunit protein bL31.